The following is a 431-amino-acid chain: Probable pectate lyase 1 (431 aa).

Positions 1 to 20 (MAVLPTWLLAMMCLLFFVGA) are cleaved as a signal peptide. N-linked (GlcNAc...) asparagine glycans are attached at residues asparagine 23, asparagine 28, and asparagine 65. Residues aspartate 227, aspartate 251, and aspartate 255 each contribute to the Ca(2+) site. Residue arginine 307 is part of the active site.

This sequence belongs to the polysaccharide lyase 1 family. It depends on Ca(2+) as a cofactor. In terms of tissue distribution, expressed in flowers, but not in leaves.

It carries out the reaction Eliminative cleavage of (1-&gt;4)-alpha-D-galacturonan to give oligosaccharides with 4-deoxy-alpha-D-galact-4-enuronosyl groups at their non-reducing ends.. The protein operates within glycan metabolism; pectin degradation; 2-dehydro-3-deoxy-D-gluconate from pectin: step 2/5. This is Probable pectate lyase 1 from Arabidopsis thaliana (Mouse-ear cress).